Here is a 132-residue protein sequence, read N- to C-terminus: Small ribosomal subunit protein uS8 (132 aa).

It belongs to the universal ribosomal protein uS8 family. As to quaternary structure, part of the 30S ribosomal subunit. Contacts proteins S5 and S12.

Its function is as follows. One of the primary rRNA binding proteins, it binds directly to 16S rRNA central domain where it helps coordinate assembly of the platform of the 30S subunit. This Rickettsia felis (strain ATCC VR-1525 / URRWXCal2) (Rickettsia azadi) protein is Small ribosomal subunit protein uS8.